Reading from the N-terminus, the 448-residue chain is Trigger factor (448 aa).

The 82-residue stretch at 162 to 243 (DDFAIIDIEA…VQQTKERKLP (82 aa)) folds into the PPIase FKBP-type domain. The segment at 426–448 (DEGKAVDPSEYFGEEEESAEESE) is disordered. Over residues 437 to 448 (FGEEEESAEESE) the composition is skewed to acidic residues.

It belongs to the FKBP-type PPIase family. Tig subfamily.

Its subcellular location is the cytoplasm. It catalyses the reaction [protein]-peptidylproline (omega=180) = [protein]-peptidylproline (omega=0). Its function is as follows. Involved in protein export. Acts as a chaperone by maintaining the newly synthesized protein in an open conformation. Functions as a peptidyl-prolyl cis-trans isomerase. This is Trigger factor from Corynebacterium diphtheriae (strain ATCC 700971 / NCTC 13129 / Biotype gravis).